A 686-amino-acid chain; its full sequence is MFSPVLFRFSKPNSFLVLLFFLSYIHFLPCAQSQREPCDTLFRCGDLTAGFPFWGVARPQPCGHPSLGLHCQKQTNSTSLIISSLMYRVLEVNTTTSTLKLVRQDFSGPFCSASFSGATLTPELFELLPDYKTLSAYYLCNPSLHYPAKFICPNKGVGSIHQDDLYHNHCGGIFNITVPIGYAPEEGALNVTNLESVLKKGFEVKLSIDERPCQECKTNGGICAYHVATPVCCKTNSSSEVNCTPMMPSGSSAHAGLSKKGKIGIGFASGFLGATLIGGCLLCIFIRRRKKLATQYTNKGLSTTTPYSSNYTMSNTPTSTTISGSNHSLVPSISNLGNGSVYSGIQVFSYEELEEATENFSKELGDGGFGTVYYGTLKDGRAVAVKRLFERSLKRVEQFKNEIDILKSLKHPNLVILYGCTTRHSRELLLVYEYISNGTLAEHLHGNQAQSRPICWPARLQIAIETASALSYLHASGIIHRDVKTTNILLDSNYQVKVADFGLSRLFPMDQTHISTAPQGTPGYVDPEYYQCYRLNEKSDVYSFGVVLSELISSKEAVDITRHRHDINLANMAISKIQNDAVHELADLSLGFARDPSVKKMMSSVAELAFRCLQQERDVRPSMDEIVEVLRVIQKDGISDSKDVVVEIDVNGGDDVGLLKHGVPPPLSPETDKTTASSSNTTASSF.

The signal sequence occupies residues 1-33; sequence MFSPVLFRFSKPNSFLVLLFFLSYIHFLPCAQS. Over 34-264 the chain is Extracellular; that stretch reads QREPCDTLFR…AGLSKKGKIG (231 aa). 5 N-linked (GlcNAc...) asparagine glycosylation sites follow: asparagine 76, asparagine 93, asparagine 175, asparagine 190, and asparagine 236. Residues 265–285 traverse the membrane as a helical segment; it reads IGFASGFLGATLIGGCLLCIF. The Cytoplasmic segment spans residues 286 to 686; it reads IRRRKKLATQ…SSSNTTASSF (401 aa). A Protein kinase domain is found at 358–633; that stretch reads ENFSKELGDG…DEIVEVLRVI (276 aa). Residues 364 to 372 and lysine 386 contribute to the ATP site; that span reads LGDGGFGTV. The residue at position 432 (tyrosine 432) is a Phosphotyrosine. Aspartate 482 acts as the Proton acceptor in catalysis. Serine 515 bears the Phosphoserine mark. Threonine 516 and threonine 521 each carry phosphothreonine. Tyrosine 529 carries the post-translational modification Phosphotyrosine. The disordered stretch occupies residues 657 to 686; the sequence is GLLKHGVPPPLSPETDKTTASSSNTTASSF. The span at 674–686 shows a compositional bias: low complexity; the sequence is TTASSSNTTASSF.

The protein belongs to the protein kinase superfamily. Ser/Thr protein kinase family.

Its subcellular location is the cell membrane. It catalyses the reaction L-seryl-[protein] + ATP = O-phospho-L-seryl-[protein] + ADP + H(+). The catalysed reaction is L-threonyl-[protein] + ATP = O-phospho-L-threonyl-[protein] + ADP + H(+). The polypeptide is LEAF RUST 10 DISEASE-RESISTANCE LOCUS RECEPTOR-LIKE PROTEIN KINASE-like 1.3 (Arabidopsis thaliana (Mouse-ear cress)).